The sequence spans 366 residues: Spermine synthase (366 aa).

The residue at position 2 (Ala-2) is an N-acetylalanine. Ser-57 bears the Phosphoserine mark. One can recognise a PABS domain in the interval 122–362 (RYWPTADGRL…ELWVFYTVWK (241 aa)). Gln-148 is an S-adenosyl 3-(methylsulfanyl)propylamine binding site. Tyr-177 and Asp-201 together coordinate spermidine. Residues Glu-220 and 255–256 (DC) each bind S-adenosyl 3-(methylsulfanyl)propylamine. Residue Asp-276 is the Proton acceptor of the active site. Residues Tyr-351 and Glu-353 each contribute to the spermidine site.

Belongs to the spermidine/spermine synthase family. In terms of assembly, homodimer. Dimerization is mediated through the N-terminal domain and seems to be required for activity as deletion of the N-terminal domain causes complete loss of activity.

It catalyses the reaction S-adenosyl 3-(methylsulfanyl)propylamine + spermidine = spermine + S-methyl-5'-thioadenosine + H(+). Its pathway is amine and polyamine biosynthesis; spermine biosynthesis; spermine from spermidine: step 1/1. Catalyzes the production of spermine from spermidine and decarboxylated S-adenosylmethionine (dcSAM). The protein is Spermine synthase of Homo sapiens (Human).